Reading from the N-terminus, the 148-residue chain is PTS system fructose-like EIIA component (148 aa).

Residues 2 to 145 (AALTASCIDL…DQVLALLNQT (144 aa)) enclose the PTS EIIA type-2 domain. His-64 acts as the Tele-phosphohistidine intermediate in catalysis. Residue His-64 is modified to Phosphohistidine; by HPr.

It localises to the cytoplasm. Functionally, the phosphoenolpyruvate-dependent sugar phosphotransferase system (sugar PTS), a major carbohydrate active transport system, catalyzes the phosphorylation of incoming sugar substrates concomitantly with their translocation across the cell membrane. The enzyme II FrvAB PTS system is involved in fructose transport. This Escherichia coli (strain K12) protein is PTS system fructose-like EIIA component.